The primary structure comprises 1132 residues: NUT family member 1 (1132 aa).

Disordered stretches follow at residues 1–56 (MASD…SVFS), 337–365 (AASKTRAPRRRQRKAQRPPAPEAPKEIPP), 383–405 (LATGESDGKQEEEGQQQEEEGMY), 476–584 (EEED…VERR), 693–714 (RGTPMAQSYDQNPSPRAAGERD), 873–892 (DASSLPEASQEAGSRGNSFS), and 922–1017 (PLNV…DEEL). The segment covering 21–36 (APSPSPALPFLPPTSD) has biased composition (pro residues). Over residues 337-352 (AASKTRAPRRRQRKAQ) the composition is skewed to basic residues. Acidic residues predominate over residues 395–404 (EGQQQEEEGM). Polar residues-rich tracts occupy residues 487-497 (SGAQLDSSPSG), 697-706 (MAQSYDQNPS), and 883-892 (EAGSRGNSFS). Basic and acidic residues predominate over residues 932-942 (GEGRVDPDLSK). Residues 950-971 (QESQESYTTGTPKATSSHQGLG) show a composition bias toward polar residues. Ser1026, Ser1029, and Ser1031 each carry phosphoserine. Positions 1031–1132 (SPREHPLSPH…GRRKKRRRSQ (102 aa)) are disordered. Position 1046 is an N5-methylglutamine (Gln1046). Positions 1123–1132 (GRRKKRRRSQ) are enriched in basic residues.

Belongs to the NUT family. Methylated at Gln-1046 by N6AMT1. Post-translationally, phosphorylation on Ser-1026, Ser-1029 or Ser-1031 is important for cytoplasmic export. As to expression, specifically expressed in testis.

It is found in the cytoplasm. It localises to the nucleus. Functionally, plays a role in the regulation of proliferation. Regulates TERT expression by modulating SP1 binding to TERT promoter binding sites. The protein is NUT family member 1 of Homo sapiens (Human).